Reading from the N-terminus, the 200-residue chain is Imidazoleglycerol-phosphate dehydratase (200 aa).

Substrate-binding positions include E13, 39–47 (HMLTLLTFH), 68–72 (HHLIE), R94, and R116. Mn(2+)-binding residues include H39, H68, H69, and E72. 4 residues coordinate Mn(2+): E141, H165, H166, and E169. Substrate-binding positions include 165–173 (HHIIEGMFK) and 195–197 (SSK).

This sequence belongs to the imidazoleglycerol-phosphate dehydratase family. The cofactor is Mn(2+).

The protein localises to the cytoplasm. It carries out the reaction D-erythro-1-(imidazol-4-yl)glycerol 3-phosphate = 3-(imidazol-4-yl)-2-oxopropyl phosphate + H2O. Its pathway is amino-acid biosynthesis; L-histidine biosynthesis; L-histidine from 5-phospho-alpha-D-ribose 1-diphosphate: step 6/9. This Lactococcus lactis subsp. lactis (strain IL1403) (Streptococcus lactis) protein is Imidazoleglycerol-phosphate dehydratase (hisB).